The sequence spans 1035 residues: DNA polymerase catalytic subunit (1035 aa).

This sequence belongs to the DNA polymerase type-B family.

It is found in the host nucleus. The enzyme catalyses DNA(n) + a 2'-deoxyribonucleoside 5'-triphosphate = DNA(n+1) + diphosphate. This Macaca mulatta (Rhesus macaque) protein is DNA polymerase catalytic subunit (UL54).